The sequence spans 234 residues: Myelin protein zero-like protein 3 (234 aa).

Residues 1-31 (MQQSGVPGSRGCALCPLLGVLFFQGVYVIFS) form the signal peptide. Residues 32–148 (LEIKADAHVR…NIPATELTVT (117 aa)) form the Ig-like V-type domain. At 32-158 (LEIKADAHVR…ERGFGTMLSS (127 aa)) the chain is on the extracellular side. A disulfide bridge links Cys-52 with Cys-128. An N-linked (GlcNAc...) asparagine glycan is attached at Asn-123. Residues 159 to 179 (VALLSILVFIPSTVVVILLLV) traverse the membrane as a helical segment. Residues 180–234 (RMGRKSAGLKKRSKSGYKKSSIEVSDDTDQEGDDCMAKLCVRCAECVDSDYEETY) are Cytoplasmic-facing.

Belongs to the myelin P0 protein family.

It localises to the membrane. In terms of biological role, mediates homophilic cell-cell adhesion. The sequence is that of Myelin protein zero-like protein 3 (MPZL3) from Bos taurus (Bovine).